A 71-amino-acid chain; its full sequence is DNA-directed RNA polymerase subunit omega (71 aa).

The protein belongs to the RNA polymerase subunit omega family. As to quaternary structure, the RNAP catalytic core consists of 2 alpha, 1 beta, 1 beta' and 1 omega subunit. When a sigma factor is associated with the core the holoenzyme is formed, which can initiate transcription.

It catalyses the reaction RNA(n) + a ribonucleoside 5'-triphosphate = RNA(n+1) + diphosphate. In terms of biological role, promotes RNA polymerase assembly. Latches the N- and C-terminal regions of the beta' subunit thereby facilitating its interaction with the beta and alpha subunits. This Aromatoleum aromaticum (strain DSM 19018 / LMG 30748 / EbN1) (Azoarcus sp. (strain EbN1)) protein is DNA-directed RNA polymerase subunit omega.